Consider the following 671-residue polypeptide: MEPIEQQLTELRTTLRHHEYLYHVMDAPEVPDAEYDRLMRELRELESQHPELITPDSPTQRVGAAPLTAFSQIRHEVPMLSLDNVFDEESFLAFNKRVQDRLKSTDDLTYCCELKLDGLAVSILYENGVLMQAATRGDGTTGEDITSNVRTIRTIPLKLHGENIPARLEVRGEVFLPQAGFEKINEEARRTGGKVFANPRNAAAGSLRQLDPRITAKRPLTFFCYGVGVLEGGELPASHSARLQQFKAWGLPVSDRVTLCHTPEEVLTYYRKVEEDRPHLGFDIDGVVIKVDSLALQEQLGFVARAPRWAVAFKFPAQEQMTFVRDVEFQVGRTGAITPVARLEPVHVAGVLVSNATLHNADEIERLGLKIGDKVVIRRAGDVIPQVVNVVLSERPADARDVVFPTHCPVCQSDVERVEGEAVARCTGGLICGAQRKESLKHFVSRRALDVDGMGDKIIDQLVEKEYVHTPADLFRLSAGKLTGLDRMGPKSAQNVVNALEKAKETTFARFLYALGIREVGEATAAALAAHFGTLEALEQASIEELQKVPDVGIVVATHTFNFFAEESNRDVIAQLLAEGVHWPAPVVVKAEEIDSPFAGKTVVLTGSLSQLSRDDAKARLVALGAKVAGSVSKKTDLVIAGEAAGSKLAKAQELGIEVIDEAEMMRLLGE.

Residues 32–36 (DAEYD), 81–82 (SL), and Glu-113 each bind NAD(+). The N6-AMP-lysine intermediate role is filled by Lys-115. Residues Arg-136, Glu-173, Lys-290, and Lys-314 each coordinate NAD(+). Zn(2+) is bound by residues Cys-408, Cys-411, Cys-426, and Cys-432. The region spanning 593 to 671 (EIDSPFAGKT…EAEMMRLLGE (79 aa)) is the BRCT domain.

The protein belongs to the NAD-dependent DNA ligase family. LigA subfamily. The cofactor is Mg(2+). Mn(2+) is required as a cofactor.

The catalysed reaction is NAD(+) + (deoxyribonucleotide)n-3'-hydroxyl + 5'-phospho-(deoxyribonucleotide)m = (deoxyribonucleotide)n+m + AMP + beta-nicotinamide D-nucleotide.. Functionally, DNA ligase that catalyzes the formation of phosphodiester linkages between 5'-phosphoryl and 3'-hydroxyl groups in double-stranded DNA using NAD as a coenzyme and as the energy source for the reaction. It is essential for DNA replication and repair of damaged DNA. This Klebsiella pneumoniae (strain 342) protein is DNA ligase.